Consider the following 129-residue polypeptide: Small ribosomal subunit protein uS11 (129 aa).

This sequence belongs to the universal ribosomal protein uS11 family. As to quaternary structure, part of the 30S ribosomal subunit. Interacts with proteins S7 and S18. Binds to IF-3.

Its function is as follows. Located on the platform of the 30S subunit, it bridges several disparate RNA helices of the 16S rRNA. Forms part of the Shine-Dalgarno cleft in the 70S ribosome. This Bacillus cytotoxicus (strain DSM 22905 / CIP 110041 / 391-98 / NVH 391-98) protein is Small ribosomal subunit protein uS11.